The sequence spans 657 residues: Chemoreceptor McpA (657 aa).

Over 1–5 the chain is Cytoplasmic; it reads MKRIR. A helical membrane pass occupies residues 6–29; the sequence is LVDLPLIIKIGFAPAFALLMLAVM. At 30 to 188 the chain is on the periplasmic side; that stretch reads AGGAILVQKS…ESESAKRQAQ (159 aa). Residues 189-212 traverse the membrane as a helical segment; it reads ATAAMSVTIIMSLLTLGAVGALAF. The Cytoplasmic segment spans residues 213 to 657; the sequence is LTVMTTRKSI…APASDGWEEF (445 aa). HAMP domains are found at residues 216-269 and 297-349; these read MTTR…HLEQ and QEAS…ETMK. A Methyl-accepting transducer domain is found at 354 to 583; that stretch reads STDGLSTGAD…QSTAATHSLK (230 aa). Glutamate methyl ester (Gln) is present on Gln378. Glu385 and Glu392 each carry glutamate methyl ester (Glu). Glutamate methyl ester (Gln) is present on Gln574. Residues 634 to 657 form a disordered region; it reads ARPGRSSGSAALAQAPASDGWEEF.

It belongs to the methyl-accepting chemotaxis (MCP) protein family.

It is found in the cell membrane. In terms of biological role, chemotactic-signal transducers respond to changes in the concentration of attractants and repellents in the environment, transduce a signal from the outside to the inside of the cell, and facilitate sensory adaptation through the variation of the level of methylation. Attractants increase the level of methylation while repellents decrease the level of methylation. This chain is Chemoreceptor McpA (mcpA), found in Caulobacter vibrioides (strain ATCC 19089 / CIP 103742 / CB 15) (Caulobacter crescentus).